The primary structure comprises 37 residues: Large ribosomal subunit protein bL36 (37 aa).

It belongs to the bacterial ribosomal protein bL36 family.

This is Large ribosomal subunit protein bL36 from Staphylococcus aureus (strain Mu3 / ATCC 700698).